The sequence spans 244 residues: MELIFLSGIKRSGKDTTADYINSNFKSIKYQLAYPIKDALAIAWERKHAENPDVFTELKYEYFEGIGYDRETPLNLNKLDVIELMEETLIYLQRQYLPINGVNILSSLEGGYSYLDIKPYEALREAINNINDTWSIRRLMQALGTDVVVNLFDRMYWVKLFALNYMDYIGSDFDYYVVTDTRQVHEMETARAMGATVIHVVRSGTESTDKHITEAGLPIEEGDLVITNDGSLEELYSKIEKILR.

A dGMP-binding site is contributed by lysine 10. Residues arginine 11, glycine 13, aspartate 15, and threonine 16 each coordinate ATP. DGMP contacts are provided by isoleucine 36, lysine 37, arginine 70, arginine 137, glycine 144, threonine 145, valine 149, tryptophan 157, aspartate 180, arginine 182, glutamine 183, glutamate 186, and threonine 213.

It belongs to the dNMP kinase family. Homodimer. The cofactor is Mg(2+).

It carries out the reaction dTMP + ATP = dTDP + ADP. It catalyses the reaction dGMP + ATP = dGDP + ADP. The catalysed reaction is 5-hydroxymethyl-dCMP + ATP = 5-hydroxymethyl-dCDP + ADP. Allows the synthesis of deoxyribonucleoside triphosphates necessary for the rapid viral DNA replication. Phosphorylates dGMP, dTMP and 5-hydroxymethyl-dCMP (hmdCMP) while excluding dCMP and dAMP. The phosphorylation of 5-hydroxymethyl-dCMP represents the first step in the replacement of cytosine by hydroxymethylcytosine in new viral DNA genomes. The protein is Deoxynucleotide monophosphate kinase (1) of Escherichia phage RB69 (Bacteriophage RB69).